Here is a 754-residue protein sequence, read N- to C-terminus: RNA exonuclease 5 (754 aa).

Residues 1 to 36 are disordered; the sequence is MELEEEENPRKRKETPNSALTTELDRPSWDVQDPEP. The region spanning 222 to 370 is the Exonuclease domain; it reads LFGLDCEVCL…EDARTALELV (149 aa). 2 RRM domains span residues 488–562 and 583–662; these read STIY…RLLT and GTIY…RHLQ.

This chain is RNA exonuclease 5 (Rexo5), found in Rattus norvegicus (Rat).